Here is a 1004-residue protein sequence, read N- to C-terminus: Glutamate [NMDA] receptor subunit 1 (1004 aa).

An N-terminal signal peptide occupies residues Met-1–Ala-39. Residues Gln-40–Ser-585 are Extracellular-facing. 7 N-linked (GlcNAc...) asparagine glycosylation sites follow: Asn-270, Asn-326, Asn-357, Asn-409, Asn-466, Asn-493, and Asn-513. Residues Pro-542 to Thr-544 and Arg-549 contribute to the glycine site. The helical transmembrane segment at Asn-586–Leu-606 threads the bilayer. Over Asp-607 to Trp-663 the chain is Cytoplasmic. A helical membrane pass occupies residues Ala-664 to Leu-684. Residues Glu-685–Asn-843 are Extracellular-facing. An N-linked (GlcNAc...) asparagine glycan is attached at Asn-705. The glycine site is built by Ser-715 and Asp-759. The helical transmembrane segment at Met-844–Ile-864 threads the bilayer. The Cytoplasmic segment spans residues Glu-865–Val-1004. Residues Thr-980–Val-1004 are disordered. The span at Gly-994–Val-1004 shows a compositional bias: polar residues.

This sequence belongs to the glutamate-gated ion channel (TC 1.A.10.1) family. Forms a heteromeric NMDA channel with Nmdar2.

It localises to the cell membrane. The protein localises to the postsynaptic cell membrane. Its subcellular location is the postsynaptic density. In terms of biological role, NMDA receptor subtype of glutamate-gated ion channels with high calcium permeability and voltage-dependent sensitivity to magnesium. Mediated by glycine. This protein plays a key role in synaptic plasticity, synaptogenesis, excitotoxicity, memory acquisition and learning. It mediates neuronal functions in glutamate neurotransmission. Is involved in the cell surface targeting of NMDA receptors. Plays a role in associative learning and in long-term memory consolidation. This is Glutamate [NMDA] receptor subunit 1 from Drosophila pseudoobscura pseudoobscura (Fruit fly).